The chain runs to 37 residues: Large ribosomal subunit protein bL36 (37 aa).

It belongs to the bacterial ribosomal protein bL36 family.

The polypeptide is Large ribosomal subunit protein bL36 (Pelotomaculum thermopropionicum (strain DSM 13744 / JCM 10971 / SI)).